Consider the following 284-residue polypeptide: NAD kinase (284 aa).

Aspartate 71 serves as the catalytic Proton acceptor. NAD(+) contacts are provided by residues 71 to 72 (DG), 144 to 145 (ND), aspartate 174, 185 to 190 (TAYNLS), and glutamine 242.

It belongs to the NAD kinase family. A divalent metal cation serves as cofactor.

Its subcellular location is the cytoplasm. The catalysed reaction is NAD(+) + ATP = ADP + NADP(+) + H(+). In terms of biological role, involved in the regulation of the intracellular balance of NAD and NADP, and is a key enzyme in the biosynthesis of NADP. Catalyzes specifically the phosphorylation on 2'-hydroxyl of the adenosine moiety of NAD to yield NADP. This Sulfurimonas denitrificans (strain ATCC 33889 / DSM 1251) (Thiomicrospira denitrificans (strain ATCC 33889 / DSM 1251)) protein is NAD kinase.